The sequence spans 36 residues: Photosystem I reaction center subunit VIII (36 aa).

A helical transmembrane segment spans residues 5–27 (FLPSILVPLVGLVFPAIAIASLF).

This sequence belongs to the PsaI family.

The protein localises to the plastid. Its subcellular location is the chloroplast thylakoid membrane. Functionally, may help in the organization of the PsaL subunit. The chain is Photosystem I reaction center subunit VIII from Chaetosphaeridium globosum (Charophycean green alga).